A 448-amino-acid polypeptide reads, in one-letter code: MALEKLGKALNNALRKLARSSTVDEATIKEVVRDIQRALIQADVNVRLVLDLTKRIEKRALEEEPPTGVSKKEHIIKIVYEELTKFLGTEAKPIEIKEKPTVLLTVGIQGSGKTTSIAKLARYFQKRGYKVGLVCSDTWRPGAYQQLKQLVEPFGIEVFGDPEEKDAIKLAKEGVEHFREKGVDIIIVDSAGRHKEEKSLIEEMKQISAAIKPHEVILVIDGTIGQQAYNQALAFKEATPIGSIIVTKLDGSAKGGGALSAVAATGAPIKFIGVGERIDDLEPFDPKRFVSRLLGLGDIQGLLEKFEELQKQQEFREEDLEKFLKGKFNLKDMYAQLEAMQKMGPLKQILQMIPGMGYSLPDDAVRVGEERLKKFKVIMDSMTEEELEHPEIINYSRIKRIARGSGTSIQEVRELLHQYNQMKKMFKSMDKRKLSKMARKFNLGGFGL.

Residues 107–114 (GIQGSGKT), 189–193 (DSAGR), and 247–250 (TKLD) contribute to the GTP site.

It belongs to the GTP-binding SRP family. SRP54 subfamily. Part of the signal recognition particle protein translocation system, which is composed of SRP and FtsY. Archaeal SRP consists of a 7S RNA molecule of 300 nucleotides and two protein subunits: SRP54 and SRP19.

Its subcellular location is the cytoplasm. It carries out the reaction GTP + H2O = GDP + phosphate + H(+). Involved in targeting and insertion of nascent membrane proteins into the cytoplasmic membrane. Binds to the hydrophobic signal sequence of the ribosome-nascent chain (RNC) as it emerges from the ribosomes. The SRP-RNC complex is then targeted to the cytoplasmic membrane where it interacts with the SRP receptor FtsY. The sequence is that of Signal recognition particle 54 kDa protein from Thermococcus onnurineus (strain NA1).